The chain runs to 124 residues: Fluoride-specific ion channel FluC (124 aa).

The next 4 helical transmembrane spans lie at 5–27 (LFVA…LMLQ), 42–62 (ILGS…EVSP), 63–83 (EIKA…STFS), and 95–115 (LVKA…VVYL). Positions 74 and 77 each coordinate Na(+).

It belongs to the fluoride channel Fluc/FEX (TC 1.A.43) family.

The protein resides in the cell inner membrane. It catalyses the reaction fluoride(in) = fluoride(out). Na(+) is not transported, but it plays an essential structural role and its presence is essential for fluoride channel function. In terms of biological role, fluoride-specific ion channel. Important for reducing fluoride concentration in the cell, thus reducing its toxicity. In Shewanella piezotolerans (strain WP3 / JCM 13877), this protein is Fluoride-specific ion channel FluC.